The chain runs to 360 residues: Geranylgeranyl pyrophosphate synthase 9, chloroplastic (360 aa).

Residues methionine 1–serine 39 constitute a chloroplast transit peptide. Positions 106, 109, and 138 each coordinate isopentenyl diphosphate. Mg(2+) contacts are provided by aspartate 145 and aspartate 151. Arginine 156 provides a ligand contact to dimethylallyl diphosphate. Arginine 157 contributes to the isopentenyl diphosphate binding site. 5 residues coordinate dimethylallyl diphosphate: lysine 245, threonine 246, glutamine 283, lysine 300, and lysine 310.

It belongs to the FPP/GGPP synthase family. In terms of assembly, monomer. No interactions with GGR. Requires Mg(2+) as cofactor.

The protein resides in the plastid. Its subcellular location is the chloroplast. The enzyme catalyses isopentenyl diphosphate + dimethylallyl diphosphate = (2E)-geranyl diphosphate + diphosphate. It catalyses the reaction isopentenyl diphosphate + (2E)-geranyl diphosphate = (2E,6E)-farnesyl diphosphate + diphosphate. It carries out the reaction isopentenyl diphosphate + (2E,6E)-farnesyl diphosphate = (2E,6E,10E)-geranylgeranyl diphosphate + diphosphate. Its pathway is isoprenoid biosynthesis; farnesyl diphosphate biosynthesis; farnesyl diphosphate from geranyl diphosphate and isopentenyl diphosphate: step 1/1. The protein operates within isoprenoid biosynthesis; geranyl diphosphate biosynthesis; geranyl diphosphate from dimethylallyl diphosphate and isopentenyl diphosphate: step 1/1. It functions in the pathway isoprenoid biosynthesis; geranylgeranyl diphosphate biosynthesis; geranylgeranyl diphosphate from farnesyl diphosphate and isopentenyl diphosphate: step 1/1. Functionally, catalyzes the trans-addition of the three molecules of IPP onto DMAPP to form geranylgeranyl pyrophosphate. In Arabidopsis thaliana (Mouse-ear cress), this protein is Geranylgeranyl pyrophosphate synthase 9, chloroplastic (GGPPS9).